The primary structure comprises 185 residues: MAEEKQKPRMKVHYVGVIRKILQEKFHYKNEMQIPRVDKIVINMGIGEATSDSKKPSIAAGDLSLITGQKAVVTYASSSIAGFKVREGMPLGAKVTLRKDRMFEFLDRLVTIALPRVRDFRGLNPKSFDGRGNFAMGIKEHIVFPEINYDKVDQIWGMDIIVCTTAKTDDEARELLRAFNFPFRS.

This sequence belongs to the universal ribosomal protein uL5 family. In terms of assembly, part of the 50S ribosomal subunit; part of the 5S rRNA/L5/L18/L25 subcomplex. Contacts the 5S rRNA and the P site tRNA. Forms a bridge to the 30S subunit in the 70S ribosome.

This is one of the proteins that bind and probably mediate the attachment of the 5S RNA into the large ribosomal subunit, where it forms part of the central protuberance. In the 70S ribosome it contacts protein S13 of the 30S subunit (bridge B1b), connecting the 2 subunits; this bridge is implicated in subunit movement. Contacts the P site tRNA; the 5S rRNA and some of its associated proteins might help stabilize positioning of ribosome-bound tRNAs. The polypeptide is Large ribosomal subunit protein uL5 (Bartonella bacilliformis (strain ATCC 35685 / KC583 / Herrer 020/F12,63)).